Reading from the N-terminus, the 767-residue chain is Phosphoribosylformylglycinamidine synthase subunit PurL (767 aa).

His-46 is an active-site residue. ATP is bound by residues Tyr-49 and Lys-88. Position 90 (Glu-90) interacts with Mg(2+). Substrate-binding positions include 91-94 and Arg-113; that span reads SHNH. The Proton acceptor role is filled by His-92. Residue Asp-114 participates in Mg(2+) binding. Gln-237 provides a ligand contact to substrate. Position 265 (Asp-265) interacts with Mg(2+). 309-311 contacts substrate; that stretch reads ESQ. ATP-binding residues include Asp-498 and Gly-535. Asn-536 serves as a coordination point for Mg(2+). Ser-538 is a substrate binding site.

This sequence belongs to the FGAMS family. As to quaternary structure, monomer. Part of the FGAM synthase complex composed of 1 PurL, 1 PurQ and 2 PurS subunits.

It localises to the cytoplasm. The enzyme catalyses N(2)-formyl-N(1)-(5-phospho-beta-D-ribosyl)glycinamide + L-glutamine + ATP + H2O = 2-formamido-N(1)-(5-O-phospho-beta-D-ribosyl)acetamidine + L-glutamate + ADP + phosphate + H(+). It participates in purine metabolism; IMP biosynthesis via de novo pathway; 5-amino-1-(5-phospho-D-ribosyl)imidazole from N(2)-formyl-N(1)-(5-phospho-D-ribosyl)glycinamide: step 1/2. Functionally, part of the phosphoribosylformylglycinamidine synthase complex involved in the purines biosynthetic pathway. Catalyzes the ATP-dependent conversion of formylglycinamide ribonucleotide (FGAR) and glutamine to yield formylglycinamidine ribonucleotide (FGAM) and glutamate. The FGAM synthase complex is composed of three subunits. PurQ produces an ammonia molecule by converting glutamine to glutamate. PurL transfers the ammonia molecule to FGAR to form FGAM in an ATP-dependent manner. PurS interacts with PurQ and PurL and is thought to assist in the transfer of the ammonia molecule from PurQ to PurL. The chain is Phosphoribosylformylglycinamidine synthase subunit PurL from Anaeromyxobacter sp. (strain Fw109-5).